A 949-amino-acid polypeptide reads, in one-letter code: Bifunctional uridylyltransferase/uridylyl-removing enzyme (949 aa).

Positions 1–377 are uridylyltransferase; that stretch reads MARHETSFPE…RFRNRVRKIA (377 aa). The interval 378 to 733 is uridylyl-removing; that stretch reads GTLDFVDDGG…VRTHDFHAIT (356 aa). An HD domain is found at 494 to 610; it reads VDEHLLRSVD…VDFAERVQSL (117 aa). ACT domains follow at residues 734 to 816 and 845 to 926; these read EITV…VIAS and VIEV…ERMP. A disordered region spans residues 926–949; the sequence is PSGIIAPTPVSRVPHGSKTTKAET.

The protein belongs to the GlnD family. It depends on Mg(2+) as a cofactor.

It carries out the reaction [protein-PII]-L-tyrosine + UTP = [protein-PII]-uridylyl-L-tyrosine + diphosphate. The enzyme catalyses [protein-PII]-uridylyl-L-tyrosine + H2O = [protein-PII]-L-tyrosine + UMP + H(+). Its activity is regulated as follows. Uridylyltransferase (UTase) activity is inhibited by glutamine, while glutamine activates uridylyl-removing (UR) activity. In terms of biological role, modifies, by uridylylation and deuridylylation, the PII regulatory proteins (GlnB and homologs), in response to the nitrogen status of the cell that GlnD senses through the glutamine level. Under low glutamine levels, catalyzes the conversion of the PII proteins and UTP to PII-UMP and PPi, while under higher glutamine levels, GlnD hydrolyzes PII-UMP to PII and UMP (deuridylylation). Thus, controls uridylylation state and activity of the PII proteins, and plays an important role in the regulation of nitrogen fixation and metabolism. In Rhizobium meliloti (strain 1021) (Ensifer meliloti), this protein is Bifunctional uridylyltransferase/uridylyl-removing enzyme.